A 252-amino-acid chain; its full sequence is MSDWNPSLYLHFAAERSRPAVELLARVPLENIKYVADLGCGPGNSTALLHQRWPAARITGIDSSPAMIAEARSALPDCQFVEADIRNWQPEQALDLIFANASLQWLPDHYELFPHLVSLLNPQGVLAVQMPDNWLEPTHVLMREVAWEQNYPDRGREPLAGVHAYYDILSEAGCEVDIWRTTYYHQMPSHQAIIDWVTATGLRPWLQDLTESEQQLFLKRYHQMLEEQYPLQENGQILLAFPRLFIVARRME.

This sequence belongs to the methyltransferase superfamily. Tam family.

It is found in the cytoplasm. It carries out the reaction trans-aconitate + S-adenosyl-L-methionine = (E)-3-(methoxycarbonyl)pent-2-enedioate + S-adenosyl-L-homocysteine. In terms of biological role, catalyzes the S-adenosylmethionine monomethyl esterification of trans-aconitate. This Escherichia coli O139:H28 (strain E24377A / ETEC) protein is Trans-aconitate 2-methyltransferase.